We begin with the raw amino-acid sequence, 671 residues long: UBA domain-containing protein RUP1 (671 aa).

Residues 1 to 41 (MMDNQAVKSLLEMGIPHEVAVDALQRTGGNLEAAVNFIFSN) enclose the UBA domain. A Phosphoserine modification is found at Ser56. The segment at 68 to 87 (GTKPCDVPNNGDQDIDMPDV) is disordered. Residues 432–501 (SKRKQARTRS…LNSARAAKME (70 aa)) adopt a coiled-coil conformation. A disordered region spans residues 643–671 (DGMGDPEQATNNINNGNDNDNDDDIDSDN). Over residues 661–671 (NDNDDDIDSDN) the composition is skewed to acidic residues.

As to quaternary structure, forms a ternary complex with RSP5 and UBP2.

The protein localises to the cytoplasm. It localises to the nucleus. Functionally, modulates the activity of the RSP5 HECT ubiquitin-protein ligase through its mediation of the interaction between RSP5 and the deubiquitinase UBP2. Involved in regulation of cell wall homeostasis. The sequence is that of UBA domain-containing protein RUP1 (RUP1) from Saccharomyces cerevisiae (strain ATCC 204508 / S288c) (Baker's yeast).